Consider the following 116-residue polypeptide: uncharacterized protein (116 aa).

The helical transmembrane segment at 22-42 (LIFLVVNLKVPAVGLELFLLV) threads the bilayer.

It is found in the membrane. This is an uncharacterized protein from Saccharomyces cerevisiae (strain ATCC 204508 / S288c) (Baker's yeast).